A 228-amino-acid chain; its full sequence is CD9 antigen (228 aa).

The Cytoplasmic portion of the chain corresponds to 1-12 (MPVKGGTKCIKY). Cys9 carries the S-palmitoyl cysteine lipid modification. Residues 13–33 (LLFGFNFIFWLAGIAVLAIGL) traverse the membrane as a helical segment. Residues 34 to 55 (WLRFDSQTKSIFEQETNNNNSS) are Extracellular-facing. 2 N-linked (GlcNAc...) asparagine glycosylation sites follow: Asn52 and Asn53. Residues 56 to 76 (FYTGVYILIGAGALMMLVGFL) traverse the membrane as a helical segment. At 77-87 (GCCGAVQESQC) the chain is on the cytoplasmic side. 3 S-palmitoyl cysteine lipidation sites follow: Cys78, Cys79, and Cys87. A helical membrane pass occupies residues 88-111 (MLGLFFGFLLVIFAIEIAAAIWGY). Residues 112–195 (SHKDEVIKEV…KEVFDNKFHI (84 aa)) lie on the Extracellular side of the membrane. Intrachain disulfides connect Cys152–Cys181 and Cys153–Cys167. Residues 196–221 (IGAVGIGIAVVMIFGMIFSMILCCAI) form a helical membrane-spanning segment. Residues Cys218 and Cys219 are each lipidated (S-palmitoyl cysteine). At 222–228 (RRNREMV) the chain is on the cytoplasmic side.

It belongs to the tetraspanin (TM4SF) family. As to quaternary structure, forms both disulfide-linked homodimers and higher homooligomers as well as heterooligomers with other members of the tetraspanin family. Interacts (via the second extracellular domain) with integrin ITGAV:ITGB3. Interacts with integrin ITGA6:ITGB1; interaction takes place in oocytes and is involved in sperm-egg fusion. Part of integrin-tetraspanin complexes composed of CD81, beta-1 and beta-2 integrins in the membrane of monocyte/macrophages. Interacts with CD63; identified in a complex with CD63 and ITGB3. Associates with CR2/CD21 and with PTGFRN/CD9P1. Part of a complex composed of CD9, CD81, PTGFRN and IGSF8. Interacts directly with IGSF8. Interacts with PDPN; this interaction is homophilic and attenuates platelet aggregation and pulmonary metastasis induced by PDPN. Interacts (on T cell side) with CD81 at immunological synapses between antigen-presenting cells and T cells. Post-translationally, palmitoylated at a low, basal level in unstimulated platelets. The level of palmitoylation increases when platelets are activated by thrombin (in vitro). The protein exists in three forms with molecular masses between 22 and 27 kDa, and is known to carry covalently linked fatty acids. Palmitoylation by ZDHHC2 regulates CD9 expression, association with other tetraspanin family proteins and function in cell adhesion.

It is found in the cell membrane. The protein localises to the membrane. The protein resides in the secreted. Its subcellular location is the extracellular exosome. Integral membrane protein associated with integrins, which regulates different processes, such as sperm-egg fusion, platelet activation and aggregation, and cell adhesion. Present at the cell surface of oocytes and plays a key role in sperm-egg fusion, possibly by organizing multiprotein complexes and the morphology of the membrane required for the fusion. In myoblasts, associates with CD81 and PTGFRN and inhibits myotube fusion during muscle regeneration. In macrophages, associates with CD81 and beta-1 and beta-2 integrins, and prevents macrophage fusion into multinucleated giant cells specialized in ingesting complement-opsonized large particles. Also prevents the fusion between mononuclear cell progenitors into osteoclasts in charge of bone resorption. Acts as a receptor for PSG17. Involved in platelet activation and aggregation. Regulates paranodal junction formation. Involved in cell adhesion, cell motility and tumor metastasis. This chain is CD9 antigen, found in Chlorocebus aethiops (Green monkey).